The sequence spans 321 residues: tRNA U34 carboxymethyltransferase (321 aa).

Residues Lys90, Trp104, Lys109, Gly129, 151-153, 180-181, Met195, Tyr199, and Arg314 each bind carboxy-S-adenosyl-L-methionine; these read DPT and IE.

Belongs to the class I-like SAM-binding methyltransferase superfamily. CmoB family. In terms of assembly, homotetramer.

It carries out the reaction carboxy-S-adenosyl-L-methionine + 5-hydroxyuridine(34) in tRNA = 5-carboxymethoxyuridine(34) in tRNA + S-adenosyl-L-homocysteine + H(+). Its function is as follows. Catalyzes carboxymethyl transfer from carboxy-S-adenosyl-L-methionine (Cx-SAM) to 5-hydroxyuridine (ho5U) to form 5-carboxymethoxyuridine (cmo5U) at position 34 in tRNAs. This is tRNA U34 carboxymethyltransferase from Haemophilus influenzae (strain PittEE).